Here is a 231-residue protein sequence, read N- to C-terminus: Transcriptional regulatory protein KdpE (231 aa).

In terms of domain architecture, Response regulatory spans 4 to 117 (KILIIEDDHA…ELRARIRVIE (114 aa)). A 4-aspartylphosphate modification is found at Asp-53. The ompR/PhoB-type DNA-binding region spans 127–227 (NIVFTNGLLS…HPRIGYQMLQ (101 aa)).

Post-translationally, phosphorylated by KdpD. Phosphorylation is required for transcriptional activity.

Functionally, member of the two-component regulatory system KdpD/KdpE that regulates the transcription of a series of virulence factors through sensing external K(+) concentrations. Also regulates capsular polysaccharide synthesis. Upon phosphorylation by KpdD, functions as a transcriptional regulator by direct binding to promoter regions of target genes including spa, hla, aur and geh. Represses the transcription of kdpFABC operon. This chain is Transcriptional regulatory protein KdpE, found in Staphylococcus aureus (strain NCTC 8325 / PS 47).